Consider the following 416-residue polypeptide: S-adenosylmethionine synthase (416 aa).

His14 is an ATP binding site. Residue Asp16 coordinates Mg(2+). Glu42 is a K(+) binding site. Residues Glu55 and Gln98 each coordinate L-methionine. The tract at residues 98-108 (QSPDIARGVDT) is flexible loop. Residues 173–175 (DGK), 249–250 (KF), Asp258, 264–265 (RK), Ala281, and Lys285 contribute to the ATP site. Asp258 is a binding site for L-methionine. Lys289 serves as a coordination point for L-methionine.

This sequence belongs to the AdoMet synthase family. As to quaternary structure, homotetramer; dimer of dimers. Requires Mg(2+) as cofactor. It depends on K(+) as a cofactor.

It is found in the cytoplasm. It catalyses the reaction L-methionine + ATP + H2O = S-adenosyl-L-methionine + phosphate + diphosphate. The protein operates within amino-acid biosynthesis; S-adenosyl-L-methionine biosynthesis; S-adenosyl-L-methionine from L-methionine: step 1/1. Catalyzes the formation of S-adenosylmethionine (AdoMet) from methionine and ATP. The overall synthetic reaction is composed of two sequential steps, AdoMet formation and the subsequent tripolyphosphate hydrolysis which occurs prior to release of AdoMet from the enzyme. In Thermosynechococcus vestitus (strain NIES-2133 / IAM M-273 / BP-1), this protein is S-adenosylmethionine synthase.